The following is a 597-amino-acid chain: MSAKPTLSKPIGSGEASSPAVVFRRLWPYIKPLIWVLIGAIVAMAVSAATDAAIPALLKPLLDKGFGAHANDRAKWFVPAAVIGLALIRSLSQYASGYLLAYVTNKILLDLRLKMFDRMIHTSVAFFQRETASTVINAIVFEVNQILNVLLSVLVTLVRDSLTVVFLLGYLFYLNWRLTLIVAVLLPAIGWLVGKINRRLRRLNREHQLLTNELSYIVEESVGGYKVVKVHNGEQYEMDRFESMSKRLRGYAMRMTVSGGLAQPLTQFLASIALAVVITIAVVQSSSDQTTVGGFVAFVTSMLLIISPLKHLMDVNQPLQRGMTACEMIFGLIDEPSEPEGGGKPLERAHGAVEFRDVSFVYSGNATHNRHTLDQISFRVAPGEMIALAGPSGSGKTTLVNLLPRFFDPTGGQILVDGVAIPEYDLHALRSQIAMVSQDVVLFNDTVANNVAYGQTADAGKVKAALRAANLWDTVEAMPKGIETLVGDNGMMLSGGQRQRLAIARAIYKDAPILILDEATSALDSESERHVQAALETLMKGRTTLVIAHRLSTIERADRILVMEAGRIVESGSHRELLAQDGLYAHLHRIQFQQSAA.

The next 6 membrane-spanning stretches (helical) occupy residues 26 to 46, 76 to 96, 138 to 158, 164 to 184, 263 to 283, and 292 to 312; these read LWPY…AMAV, WFVP…QYAS, AIVF…VTLV, VVFL…IVAV, QPLT…IAVV, and VGGF…LKHL. Residues 38 to 321 enclose the ABC transmembrane type-1 domain; that stretch reads IGAIVAMAVS…LMDVNQPLQR (284 aa). One can recognise an ABC transporter domain in the interval 353–590; the sequence is VEFRDVSFVY…DGLYAHLHRI (238 aa). 390 to 397 is a binding site for ATP; the sequence is GPSGSGKT.

This sequence belongs to the ABC transporter superfamily. Lipid exporter (TC 3.A.1.106) family. Homodimer.

It is found in the cell inner membrane. It carries out the reaction ATP + H2O + lipid A-core oligosaccharideSide 1 = ADP + phosphate + lipid A-core oligosaccharideSide 2.. In terms of biological role, involved in lipopolysaccharide (LPS) biosynthesis. Translocates lipid A-core from the inner to the outer leaflet of the inner membrane. Transmembrane domains (TMD) form a pore in the inner membrane and the ATP-binding domain (NBD) is responsible for energy generation. The protein is ATP-dependent lipid A-core flippase of Paraburkholderia xenovorans (strain LB400).